The following is a 1351-amino-acid chain: uncharacterized protein (1351 aa).

Basic and acidic residues predominate over residues 1–17 (MSKKDSKNSPKKSKDTN). The tract at residues 1 to 31 (MSKKDSKNSPKKSKDTNSDESSSSNAETSSD) is disordered. Low complexity predominate over residues 19–31 (DESSSSNAETSSD).

This is an uncharacterized protein from Acanthamoeba polyphaga mimivirus (APMV).